The chain runs to 169 residues: MRTLKIEPLTKEAFAPFGDVIETAGSDYFMINNGSTRRYHKLATVETAQPEDNAIISIFSAEKLEMPLRIRMLERHPLGSQAFIPLLGNPFLVVVAPLGDVPVPGLVRAFLTNGRQGVNYHRGVWHHPVLTIEKRDDFLVVDRSGSGNNCDEHFFTEDEQLLLDPQSNQ.

It belongs to the ureidoglycolate lyase family. In terms of assembly, homodimer. Requires Ni(2+) as cofactor.

The catalysed reaction is (S)-ureidoglycolate = urea + glyoxylate. It functions in the pathway nitrogen metabolism; (S)-allantoin degradation. Its function is as follows. Catalyzes the catabolism of the allantoin degradation intermediate (S)-ureidoglycolate, generating urea and glyoxylate. Involved in the utilization of allantoin as nitrogen source. In Pseudomonas aeruginosa (strain LESB58), this protein is Ureidoglycolate lyase.